The following is a 374-amino-acid chain: Peptide chain release factor 2 (374 aa).

At Gln254 the chain carries N5-methylglutamine.

The protein belongs to the prokaryotic/mitochondrial release factor family. Post-translationally, methylated by PrmC. Methylation increases the termination efficiency of RF2.

It localises to the cytoplasm. Functionally, peptide chain release factor 2 directs the termination of translation in response to the peptide chain termination codons UGA and UAA. This chain is Peptide chain release factor 2, found in Renibacterium salmoninarum (strain ATCC 33209 / DSM 20767 / JCM 11484 / NBRC 15589 / NCIMB 2235).